Consider the following 158-residue polypeptide: Transcription elongation factor GreA (158 aa).

This sequence belongs to the GreA/GreB family.

In terms of biological role, necessary for efficient RNA polymerase transcription elongation past template-encoded arresting sites. The arresting sites in DNA have the property of trapping a certain fraction of elongating RNA polymerases that pass through, resulting in locked ternary complexes. Cleavage of the nascent transcript by cleavage factors such as GreA or GreB allows the resumption of elongation from the new 3'terminus. GreA releases sequences of 2 to 3 nucleotides. This chain is Transcription elongation factor GreA, found in Ruthia magnifica subsp. Calyptogena magnifica.